The sequence spans 386 residues: Acetate kinase (386 aa).

N9 contacts Mg(2+). K16 contributes to the ATP binding site. R74 is a substrate binding site. Catalysis depends on D131, which acts as the Proton donor/acceptor. ATP-binding positions include 191–195 (HLGNG), 265–267 (DFR), and 313–317 (GVGEN). E367 serves as a coordination point for Mg(2+).

It belongs to the acetokinase family. Homodimer. It depends on Mg(2+) as a cofactor. The cofactor is Mn(2+).

Its subcellular location is the cytoplasm. The catalysed reaction is acetate + ATP = acetyl phosphate + ADP. It participates in metabolic intermediate biosynthesis; acetyl-CoA biosynthesis; acetyl-CoA from acetate: step 1/2. Functionally, catalyzes the formation of acetyl phosphate from acetate and ATP. Can also catalyze the reverse reaction. This Mycolicibacterium gilvum (strain PYR-GCK) (Mycobacterium gilvum (strain PYR-GCK)) protein is Acetate kinase.